A 238-amino-acid chain; its full sequence is Adenylate dimethylallyltransferase (238 aa).

It belongs to the isopentenyl transferase family.

The enzyme catalyses dimethylallyl diphosphate + AMP = N(6)-(dimethylallyl)adenosine 5'-phosphate + diphosphate. In terms of biological role, transfers dimethylallyl groups to AMP as part of the biosynthesis of cytokinin phytohormones. The sequence is that of Adenylate dimethylallyltransferase (tzs) from Ralstonia nicotianae (strain ATCC BAA-1114 / GMI1000) (Ralstonia solanacearum).